We begin with the raw amino-acid sequence, 353 residues long: Photosystem II protein D1 (353 aa).

Thr-2 is modified (N-acetylthreonine). Position 2 is a phosphothreonine (Thr-2). Helical transmembrane passes span 29 to 46 (YIGWFGVLMIPTLLTATS), 118 to 133 (HFLLGVACYMGREWEL), and 142 to 156 (WIAVAYSAPVAAATA). His-118 contacts chlorophyll a. Pheophytin a is bound at residue Tyr-126. Asp-170 and Glu-189 together coordinate [CaMn4O5] cluster. Residues 197 to 218 (FHMLGVAGVFGGSLFSAMHGSL) traverse the membrane as a helical segment. His-198 lines the chlorophyll a pocket. A quinone contacts are provided by residues His-215 and 264-265 (SF). His-215 contributes to the Fe cation binding site. His-272 serves as a coordination point for Fe cation. Residues 274–288 (FLAAWPVVGIWFTAL) form a helical membrane-spanning segment. 4 residues coordinate [CaMn4O5] cluster: His-332, Glu-333, Asp-342, and Ala-344. Residues 345-353 (VVEAPSTNG) constitute a propeptide that is removed on maturation.

This sequence belongs to the reaction center PufL/M/PsbA/D family. PSII is composed of 1 copy each of membrane proteins PsbA, PsbB, PsbC, PsbD, PsbE, PsbF, PsbH, PsbI, PsbJ, PsbK, PsbL, PsbM, PsbT, PsbX, PsbY, PsbZ, Psb30/Ycf12, at least 3 peripheral proteins of the oxygen-evolving complex and a large number of cofactors. It forms dimeric complexes. It depends on The D1/D2 heterodimer binds P680, chlorophylls that are the primary electron donor of PSII, and subsequent electron acceptors. It shares a non-heme iron and each subunit binds pheophytin, quinone, additional chlorophylls, carotenoids and lipids. D1 provides most of the ligands for the Mn4-Ca-O5 cluster of the oxygen-evolving complex (OEC). There is also a Cl(-1) ion associated with D1 and D2, which is required for oxygen evolution. The PSII complex binds additional chlorophylls, carotenoids and specific lipids. as a cofactor. Tyr-161 forms a radical intermediate that is referred to as redox-active TyrZ, YZ or Y-Z. In terms of processing, C-terminally processed by CTPA; processing is essential to allow assembly of the oxygen-evolving complex and thus photosynthetic growth.

The protein resides in the plastid. It is found in the chloroplast thylakoid membrane. The enzyme catalyses 2 a plastoquinone + 4 hnu + 2 H2O = 2 a plastoquinol + O2. Its function is as follows. Photosystem II (PSII) is a light-driven water:plastoquinone oxidoreductase that uses light energy to abstract electrons from H(2)O, generating O(2) and a proton gradient subsequently used for ATP formation. It consists of a core antenna complex that captures photons, and an electron transfer chain that converts photonic excitation into a charge separation. The D1/D2 (PsbA/PsbD) reaction center heterodimer binds P680, the primary electron donor of PSII as well as several subsequent electron acceptors. This is Photosystem II protein D1 from Aethionema grandiflorum (Persian stone-cress).